The following is a 150-amino-acid chain: Aspartate carbamoyltransferase regulatory chain (150 aa).

Zn(2+) contacts are provided by Cys105, Cys110, Cys133, and Cys136.

It belongs to the PyrI family. In terms of assembly, contains catalytic and regulatory chains. Zn(2+) serves as cofactor.

Its function is as follows. Involved in allosteric regulation of aspartate carbamoyltransferase. The protein is Aspartate carbamoyltransferase regulatory chain of Thermococcus sibiricus (strain DSM 12597 / MM 739).